We begin with the raw amino-acid sequence, 138 residues long: Large ribosomal subunit protein uL16 (138 aa).

Belongs to the universal ribosomal protein uL16 family. In terms of assembly, part of the 50S ribosomal subunit.

Binds 23S rRNA and is also seen to make contacts with the A and possibly P site tRNAs. This is Large ribosomal subunit protein uL16 from Anaeromyxobacter dehalogenans (strain 2CP-1 / ATCC BAA-258).